Reading from the N-terminus, the 507-residue chain is E3 SUMO-protein ligase PIAS4 (507 aa).

The residue at position 2 (A2) is an N-acetylalanine. K9 participates in a covalent cross-link: Glycyl lysine isopeptide (Lys-Gly) (interchain with G-Cter in SUMO2). Residues 12-46 (VMSFRVSDLQMLLGFVGRSKSGLKHELVTRALQLV) enclose the SAP domain. Residues 20–24 (LQMLL) carry the LXXLL motif motif. Residue K35 forms a Glycyl lysine isopeptide (Lys-Gly) (interchain with G-Cter in SUMO); alternate linkage. K35 participates in a covalent cross-link: Glycyl lysine isopeptide (Lys-Gly) (interchain with G-Cter in SUMO2); alternate. Glycyl lysine isopeptide (Lys-Gly) (interchain with G-Cter in SUMO2) cross-links involve residues K56, K59, K68, and K69. N6-acetyllysine is present on K107. The PINIT domain maps to 112–272 (LGRLPTKTLK…SVALYLVRQL (161 aa)). A Glycyl lysine isopeptide (Lys-Gly) (interchain with G-Cter in SUMO2) cross-link involves residue K118. K128 is covalently cross-linked (Glycyl lysine isopeptide (Lys-Gly) (interchain with G-Cter in SUMO)). Residues 304 to 385 (PDSEIATTGV…LSKILSECEG (82 aa)) form an SP-RING-type zinc finger. Positions 335, 337, 358, and 361 each coordinate Zn(2+). Residues 426-507 (APASSTPGIG…PFQKGLVPAC (82 aa)) are disordered. Positions 434 to 450 (IGSGLSGPGSAGSGAGA) are enriched in gly residues. Acidic residues predominate over residues 474–489 (SEDEDEDEDDDEDEDE).

This sequence belongs to the PIAS family. In terms of assembly, interacts with AR, GATA2, LEF1, TP53 and STAT1 (IFNG-induced). Interacts with TICAM1. Interacts with MTA1. Interacts with PRDM1/Blimp-1. Interacts with TRIM32 upon treatment with UVB and TNF-alpha. (Microbial infection) Interacts ewith Moloney murine leukemia virus Capsid protein p30. Sumoylated. Lys-35 is the main site of sumoylation. Sumoylation is required for TCF4 sumoylation and transcriptional activation. Represses LEF1 transcriptional activity. SUMO1 is the preferred conjugate. In terms of processing, ubiquitinated by TRIM32 upon treatment with UVB and TNF-alpha. Widely expressed, with highest levels in testis. Also expressed in vascular endothelial cells, in primary keratinocytes and in the CNS, including cortex, olfactory bulb, spinal cord, thalamus and trigeminal ganglion. Low expression, if any, in liver and lung.

Its subcellular location is the nucleus. It localises to the PML body. The catalysed reaction is S-ubiquitinyl-[E2 ubiquitin-conjugating enzyme]-L-cysteine + [acceptor protein]-L-lysine = [E2 ubiquitin-conjugating enzyme]-L-cysteine + N(6)-ubiquitinyl-[acceptor protein]-L-lysine.. The protein operates within protein modification; protein sumoylation. Its function is as follows. Functions as an E3-type small ubiquitin-like modifier (SUMO) ligase, stabilizing the interaction between UBE2I and the substrate, and as a SUMO-tethering factor. Mediates sumoylation of ALKBH5, AXIN1, CEBPA, KLF8, GATA2, PARK7, HERC2, MYB, TCF4 and RNF168. Plays a crucial role as a transcriptional coregulation in various cellular pathways, including the STAT pathway, the p53/TP53 pathway, the Wnt pathway and the steroid hormone signaling pathway. Involved in gene silencing. In Wnt signaling, represses LEF1 and enhances TCF4 transcriptional activities through promoting their sumoylations. Enhances the sumoylation of MTA1 and may participate in its paralog-selective sumoylation. Binds to AT-rich DNA sequences, known as matrix or scaffold attachment regions (MARs/SARs). Catalyzes conjugation of SUMO2 to KAT5 in response to DNA damage, facilitating repair of DNA double-strand breaks (DSBs) via homologous recombination (HR). Mediates sumoylation of PARP1 in response to PARP1 trapping to chromatin. Mediates sumoylation of KLF8, repressiing KLF8 transcriptional activity and cell cycle progression into G(1) phase. Sumoylates ALKBH5 downstream of MAPK8/JNK1 and MAPK9/JNK2 in response to reactive oxygen species (ROS), inhibiting ALKBH5 RNA demethylase activity. The polypeptide is E3 SUMO-protein ligase PIAS4 (Pias4) (Mus musculus (Mouse)).